Consider the following 77-residue polypeptide: Large ribosomal subunit protein bL28 (77 aa).

The protein belongs to the bacterial ribosomal protein bL28 family.

This is Large ribosomal subunit protein bL28 from Albidiferax ferrireducens (strain ATCC BAA-621 / DSM 15236 / T118) (Rhodoferax ferrireducens).